A 325-amino-acid chain; its full sequence is Eukaryotic translation initiation factor 3 subunit I (325 aa).

5 WD repeats span residues 1-39 (MKPILLQGHERSITQIKYNREGDLLFTVAKDPIVNVWYS), 43-81 (ERLGTYMGHTGAVWCVDADWDTKHVLTGSADNSCRLWDC), 87-127 (LALL…FFDL), 135-175 (NNEP…QYSA), and 180-217 (VLVNVKEHSRQINDIQLSRDMTMFVTASKDNTAKLFDS). Phosphothreonine is present on Thr219. 2 WD repeats span residues 221–267 (EHQK…KFEA) and 275–316 (EEEF…YFDP). Lys264 bears the N6-acetyllysine mark. A Glycyl lysine isopeptide (Lys-Gly) (interchain with G-Cter in ubiquitin) cross-link involves residue Lys282. Tyr308 bears the Phosphotyrosine mark.

As to quaternary structure, component of the eukaryotic translation initiation factor 3 (eIF-3) complex, which is composed of 13 subunits: EIF3A, EIF3B, EIF3C, EIF3D, EIF3E, EIF3F, EIF3G, EIF3H, EIF3I, EIF3J, EIF3K, EIF3L and EIF3M. The eIF-3 complex appears to include 3 stable modules: module A is composed of EIF3A, EIF3B, EIF3G and EIF3I; module B is composed of EIF3F, EIF3H, and EIF3M; and module C is composed of EIF3C, EIF3D, EIF3E, EIF3K and EIF3L. EIF3C of module C binds EIF3B of module A and EIF3H of module B, thereby linking the three modules. EIF3J is a labile subunit that binds to the eIF-3 complex via EIF3B. The eIF-3 complex interacts with RPS6KB1 under conditions of nutrient depletion. Mitogenic stimulation leads to binding and activation of a complex composed of MTOR and RPTOR, leading to phosphorylation and release of RPS6KB1 and binding of EIF4B to eIF-3. Phosphorylated by TGF-beta type II receptor.

It localises to the cytoplasm. In terms of biological role, component of the eukaryotic translation initiation factor 3 (eIF-3) complex, which is required for several steps in the initiation of protein synthesis. The eIF-3 complex associates with the 40S ribosome and facilitates the recruitment of eIF-1, eIF-1A, eIF-2:GTP:methionyl-tRNAi and eIF-5 to form the 43S pre-initiation complex (43S PIC). The eIF-3 complex stimulates mRNA recruitment to the 43S PIC and scanning of the mRNA for AUG recognition. The eIF-3 complex is also required for disassembly and recycling of post-termination ribosomal complexes and subsequently prevents premature joining of the 40S and 60S ribosomal subunits prior to initiation. The eIF-3 complex specifically targets and initiates translation of a subset of mRNAs involved in cell proliferation, including cell cycling, differentiation and apoptosis, and uses different modes of RNA stem-loop binding to exert either translational activation or repression. This Homo sapiens (Human) protein is Eukaryotic translation initiation factor 3 subunit I.